The primary structure comprises 62 residues: Small ribosomal subunit protein bS21 (62 aa).

Basic and acidic residues predominate over residues 40–52 (KPSVKRKLKSEAA). The tract at residues 40 to 62 (KPSVKRKLKSEAARKRKNKRRRY) is disordered. Over residues 53–62 (RKRKNKRRRY) the composition is skewed to basic residues.

Belongs to the bacterial ribosomal protein bS21 family.

The polypeptide is Small ribosomal subunit protein bS21 (Limosilactobacillus fermentum (strain NBRC 3956 / LMG 18251) (Lactobacillus fermentum)).